The sequence spans 474 residues: tRNA-2-methylthio-N(6)-dimethylallyladenosine synthase (474 aa).

An MTTase N-terminal domain is found at 3–120; the sequence is KKLHIKTWGC…LPEMINSVRG (118 aa). [4Fe-4S] cluster contacts are provided by C12, C49, C83, C157, C161, and C164. Positions 143 to 375 constitute a Radical SAM core domain; sequence RAEGPTAFVS…QERINQQAMA (233 aa). Residues 378 to 441 form the TRAM domain; it reads RRMLGTTQRI…PNSLRGKVVR (64 aa).

The protein belongs to the methylthiotransferase family. MiaB subfamily. In terms of assembly, monomer. Requires [4Fe-4S] cluster as cofactor.

It localises to the cytoplasm. The catalysed reaction is N(6)-dimethylallyladenosine(37) in tRNA + (sulfur carrier)-SH + AH2 + 2 S-adenosyl-L-methionine = 2-methylsulfanyl-N(6)-dimethylallyladenosine(37) in tRNA + (sulfur carrier)-H + 5'-deoxyadenosine + L-methionine + A + S-adenosyl-L-homocysteine + 2 H(+). In terms of biological role, catalyzes the methylthiolation of N6-(dimethylallyl)adenosine (i(6)A), leading to the formation of 2-methylthio-N6-(dimethylallyl)adenosine (ms(2)i(6)A) at position 37 in tRNAs that read codons beginning with uridine. The sequence is that of tRNA-2-methylthio-N(6)-dimethylallyladenosine synthase from Escherichia coli (strain SE11).